The sequence spans 695 residues: Adhesion G protein-coupled receptor F4 (695 aa).

An N-terminal signal peptide occupies residues 1-21 (MKMKSQATMICCLVFFLSTEC). Residues 22–406 (SHYRSKIHLK…TDKVLDYITC (385 aa)) are Extracellular-facing. 12 N-linked (GlcNAc...) asparagine glycosylation sites follow: N61, N169, N177, N209, N229, N250, N257, N263, N264, N286, N309, and N340. In terms of domain architecture, GAIN-B spans 249-397 (HNTSEKSLNF…SILMSSKSMT (149 aa)). 2 cysteine pairs are disulfide-bonded: C349–C376 and C364–C378. The interval 349 to 397 (CVGWHSKKRRWDEKACQMMLDIRNEVKCRCNYTSVVMSFSILMSSKSMT) is GPS. The N-linked (GlcNAc...) asparagine glycan is linked to N379. The helical transmembrane segment at 407-427 (IGLSVSILSLVLCLIIEATVW) threads the bilayer. Residues 428–440 (SRVVVTEISYMRH) are Cytoplasmic-facing. Residues 441–461 (VCIVNIAVSLLTANVWFIIGS) traverse the membrane as a helical segment. The Extracellular portion of the chain corresponds to 462–485 (HFNIKAQDYNMCVAVTFFSHFFYL). The helical transmembrane segment at 486-506 (SLFFWMLFKALLIIYGILVIF) threads the bilayer. At 507-515 (RRMMKSRMM) the chain is on the cytoplasmic side. A helical transmembrane segment spans residues 516 to 536 (VIGFAIGYGCPLIIAVTTVAI). Topologically, residues 537-561 (TEPEKGYMRPEACWLNWDNTKALLA) are extracellular. Residues 562–582 (FAIPAFVIVAVNLIVVLVVAV) form a helical membrane-spanning segment. The Cytoplasmic segment spans residues 583–606 (NTQRPSIGSSKSQDVVIIMRISKN). A helical membrane pass occupies residues 607-627 (VAILTPLLGLTWGFGIATLIE). The Extracellular portion of the chain corresponds to 628-634 (GTSLTFH). The helical transmembrane segment at 635–655 (IIFALLNAFQGFFILLFGTIM) threads the bilayer. The Cytoplasmic segment spans residues 656–695 (DHKIRDALRMRMSSLKGKSRAAENASLGPTNGSKLMNRQG). The tract at residues 674–695 (SRAAENASLGPTNGSKLMNRQG) is disordered. Polar residues predominate over residues 682 to 695 (LGPTNGSKLMNRQG).

Belongs to the G-protein coupled receptor 2 family. Adhesion G-protein coupled receptor (ADGR) subfamily.

The protein localises to the membrane. Orphan receptor. This is Adhesion G protein-coupled receptor F4 (ADGRF4) from Homo sapiens (Human).